Consider the following 448-residue polypeptide: Inositol polyphosphate 5-phosphatase K (448 aa).

Positions 16–318 are catalytic; it reads IHVVTWNVAS…SDHKPVSGTF (303 aa). The segment at 318–448 is required for interaction with GPR78 and PAK1; it reads FDLELKPLVS…DPLGEAQPQI (131 aa). The interval 321 to 448 is required for ruffle localization; the sequence is ELKPLVSAPL…DPLGEAQPQI (128 aa).

The protein belongs to the inositol 1,4,5-trisphosphate 5-phosphatase type II family. Interacts with GPR78; necessary for INPP5K localization at the endoplasmic reticulum. Interacts with PAK1; competes with GPR78. Ubiquitously expressed with highest levels in skeletal muscle, heart and kidney.

The protein localises to the endoplasmic reticulum. It localises to the cytoplasm. The catalysed reaction is 1D-myo-inositol 1,4,5-trisphosphate + H2O = 1D-myo-inositol 1,4-bisphosphate + phosphate. It carries out the reaction 1D-myo-inositol 1,3,4,5-tetrakisphosphate + H2O = 1D-myo-inositol 1,3,4-trisphosphate + phosphate. The enzyme catalyses a 1,2-diacyl-sn-glycero-3-phospho-(1D-myo-inositol-4,5-bisphosphate) + H2O = a 1,2-diacyl-sn-glycero-3-phospho-(1D-myo-inositol 4-phosphate) + phosphate. It catalyses the reaction a 1,2-diacyl-sn-glycero-3-phospho-(1D-myo-inositol-3,4,5-trisphosphate) + H2O = a 1,2-diacyl-sn-glycero-3-phospho-(1D-myo-inositol-3,4-bisphosphate) + phosphate. The catalysed reaction is 1,2-dioctanoyl-sn-glycero-3-phospho-(1D-myo-inositol-3,4,5-trisphosphate) + H2O = 1,2-dioctanoyl-sn-glycero-3-phospho-(1D-myo-inositol-3,4-bisphosphate) + phosphate. Functionally, inositol 5-phosphatase which acts on inositol 1,4,5-trisphosphate, inositol 1,3,4,5-tetrakisphosphate, phosphatidylinositol 4,5-bisphosphate and phosphatidylinositol 3,4,5-trisphosphate. Has 6-fold higher affinity for phosphatidylinositol 4,5-bisphosphate than for inositol 1,4,5-trisphosphate. Negatively regulates assembly of the actin cytoskeleton. Controls insulin-dependent glucose uptake among inositol 3,4,5-trisphosphate phosphatases; therefore, is the specific regulator for insulin signaling in skeletal muscle. In Homo sapiens (Human), this protein is Inositol polyphosphate 5-phosphatase K.